A 692-amino-acid polypeptide reads, in one-letter code: MARKTPLNRIRNIGIAAHIDAGKTTTSERILFYTGVSHKIGEVHDGAATMDWMEQEKERGITITSAATTCFWKDHQINLIDTPGHVDFTIEVERSMRVLDGAVSVFCSVGGVQPQSETVWRQANKYGVPRIVFVNKMDRIGANFYNVENQIKQRLKANPVPINIPIGAEDTFIGVIDLVQMKAIVWNNETMGAKYDVEEIPSDLLEKAKQYREKLVEAVAEQDEALMEKYLGGEELNIEEIKKGIKTGCLNMSLIPMLCGSSFKNKGVQTLLDAVIDYLPAPTEVVDIKGIDPKTEEEVFVKSSDDGEFAGLAFKIMTDPFVGQLTFVRVYRGNLESGSYVYNSTKDKKERVGRLLKMHSNKREDIKEVYAGEICAFVGLKDTLTGDTLCDEKNAVVLERMEFPEPVIHIAVEPKTKADQEKMGVALGKLAEEDPSFRVMTQEETGQTLIGGMGELHLEIIVDRLKREFKVEAEIGQPQVAFRETIRSSVSKEHKYAKQSGGRGQYGHVFIKLEPKEPGSGYEFVNEISGGVIPKEYIPAVDKGIQEAMQNGVLAGYPVVDFKVTLYDGSYHDVDSSEMAFKIAGSMAFKEASRAANPVLLEPMMKVEVEVPEEYMGDVIGDLNRRRGQINSMDDRLGLKIVNAFVPLVEMFGYSTDLRSATQGRGTYSMEFDHYGEVPSNIAKEIVEKRKG.

The tr-type G domain occupies 8 to 283 (NRIRNIGIAA…AVIDYLPAPT (276 aa)). Residues 17–24 (AHIDAGKT), 81–85 (DTPGH), and 135–138 (NKMD) contribute to the GTP site.

Belongs to the TRAFAC class translation factor GTPase superfamily. Classic translation factor GTPase family. EF-G/EF-2 subfamily.

It localises to the cytoplasm. Functionally, catalyzes the GTP-dependent ribosomal translocation step during translation elongation. During this step, the ribosome changes from the pre-translocational (PRE) to the post-translocational (POST) state as the newly formed A-site-bound peptidyl-tRNA and P-site-bound deacylated tRNA move to the P and E sites, respectively. Catalyzes the coordinated movement of the two tRNA molecules, the mRNA and conformational changes in the ribosome. The protein is Elongation factor G of Helicobacter pylori (strain P12).